The sequence spans 338 residues: Ketol-acid reductoisomerase (NADP(+)) (338 aa).

Residues 1-181 enclose the KARI N-terminal Rossmann domain; sequence MKVYYDKDCD…GGGRTGIIET (181 aa). Residues 24-27, arginine 47, serine 50, threonine 52, and 82-85 contribute to the NADP(+) site; these read YGSQ and DEFQ. Histidine 107 is a catalytic residue. Glycine 133 serves as a coordination point for NADP(+). The 146-residue stretch at 182–327 folds into the KARI C-terminal knotted domain; it reads TFKDETETDL…EQLRSMMPWI (146 aa). The Mg(2+) site is built by aspartate 190, glutamate 194, glutamate 226, and glutamate 230. Serine 251 is a substrate binding site.

It belongs to the ketol-acid reductoisomerase family. Requires Mg(2+) as cofactor.

The catalysed reaction is (2R)-2,3-dihydroxy-3-methylbutanoate + NADP(+) = (2S)-2-acetolactate + NADPH + H(+). It catalyses the reaction (2R,3R)-2,3-dihydroxy-3-methylpentanoate + NADP(+) = (S)-2-ethyl-2-hydroxy-3-oxobutanoate + NADPH + H(+). The protein operates within amino-acid biosynthesis; L-isoleucine biosynthesis; L-isoleucine from 2-oxobutanoate: step 2/4. It functions in the pathway amino-acid biosynthesis; L-valine biosynthesis; L-valine from pyruvate: step 2/4. Involved in the biosynthesis of branched-chain amino acids (BCAA). Catalyzes an alkyl-migration followed by a ketol-acid reduction of (S)-2-acetolactate (S2AL) to yield (R)-2,3-dihydroxy-isovalerate. In the isomerase reaction, S2AL is rearranged via a Mg-dependent methyl migration to produce 3-hydroxy-3-methyl-2-ketobutyrate (HMKB). In the reductase reaction, this 2-ketoacid undergoes a metal-dependent reduction by NADPH to yield (R)-2,3-dihydroxy-isovalerate. The polypeptide is Ketol-acid reductoisomerase (NADP(+)) (Pseudomonas fluorescens (strain SBW25)).